The chain runs to 162 residues: ATP synthase subunit b 1 (162 aa).

Residues 3 to 23 form a helical membrane-spanning segment; sequence FLDATFFAFVGLVLFLALVVY.

The protein belongs to the ATPase B chain family. As to quaternary structure, F-type ATPases have 2 components, F(1) - the catalytic core - and F(0) - the membrane proton channel. F(1) has five subunits: alpha(3), beta(3), gamma(1), delta(1), epsilon(1). F(0) has three main subunits: a(1), b(2) and c(10-14). The alpha and beta chains form an alternating ring which encloses part of the gamma chain. F(1) is attached to F(0) by a central stalk formed by the gamma and epsilon chains, while a peripheral stalk is formed by the delta and b chains.

Its subcellular location is the cell inner membrane. F(1)F(0) ATP synthase produces ATP from ADP in the presence of a proton or sodium gradient. F-type ATPases consist of two structural domains, F(1) containing the extramembraneous catalytic core and F(0) containing the membrane proton channel, linked together by a central stalk and a peripheral stalk. During catalysis, ATP synthesis in the catalytic domain of F(1) is coupled via a rotary mechanism of the central stalk subunits to proton translocation. In terms of biological role, component of the F(0) channel, it forms part of the peripheral stalk, linking F(1) to F(0). This is ATP synthase subunit b 1 from Rhizobium johnstonii (strain DSM 114642 / LMG 32736 / 3841) (Rhizobium leguminosarum bv. viciae).